The sequence spans 395 residues: Imidazolonepropionase (395 aa).

Residues H63 and H65 each coordinate Fe(3+). Zn(2+) is bound by residues H63 and H65. Positions 72, 135, and 168 each coordinate 4-imidazolone-5-propanoate. An N-formimidoyl-L-glutamate-binding site is contributed by Y135. H233 is a binding site for Fe(3+). Residue H233 coordinates Zn(2+). Position 236 (Q236) interacts with 4-imidazolone-5-propanoate. D308 lines the Fe(3+) pocket. D308 lines the Zn(2+) pocket. Residues N310 and G312 each contribute to the N-formimidoyl-L-glutamate site. Position 313 (T313) interacts with 4-imidazolone-5-propanoate.

The protein belongs to the metallo-dependent hydrolases superfamily. HutI family. Requires Zn(2+) as cofactor. Fe(3+) serves as cofactor.

The protein localises to the cytoplasm. The catalysed reaction is 4-imidazolone-5-propanoate + H2O = N-formimidoyl-L-glutamate. Its pathway is amino-acid degradation; L-histidine degradation into L-glutamate; N-formimidoyl-L-glutamate from L-histidine: step 3/3. In terms of biological role, catalyzes the hydrolytic cleavage of the carbon-nitrogen bond in imidazolone-5-propanoate to yield N-formimidoyl-L-glutamate. It is the third step in the universal histidine degradation pathway. The polypeptide is Imidazolonepropionase (Cereibacter sphaeroides (strain ATCC 17029 / ATH 2.4.9) (Rhodobacter sphaeroides)).